A 103-amino-acid chain; its full sequence is DNA-binding protein TRF1 (103 aa).

Functionally, DNA-binding protein that recognizes the inverted terminal repeats of the pGKl linear DNA plasmids. The polypeptide is DNA-binding protein TRF1 (TRF1) (Kluyveromyces lactis (strain ATCC 8585 / CBS 2359 / DSM 70799 / NBRC 1267 / NRRL Y-1140 / WM37) (Yeast)).